The chain runs to 265 residues: Indole-3-glycerol phosphate synthase (265 aa).

The protein belongs to the TrpC family.

It carries out the reaction 1-(2-carboxyphenylamino)-1-deoxy-D-ribulose 5-phosphate + H(+) = (1S,2R)-1-C-(indol-3-yl)glycerol 3-phosphate + CO2 + H2O. The protein operates within amino-acid biosynthesis; L-tryptophan biosynthesis; L-tryptophan from chorismate: step 4/5. In Syntrophobacter fumaroxidans (strain DSM 10017 / MPOB), this protein is Indole-3-glycerol phosphate synthase.